A 333-amino-acid polypeptide reads, in one-letter code: Holliday junction branch migration complex subunit RuvB (333 aa).

The segment at 1–182 (MEERLVSGDV…FGVISRLEYY (182 aa)) is large ATPase domain (RuvB-L). ATP-binding positions include Leu21, Arg22, Gly63, Lys66, Thr67, Thr68, 129-131 (EDY), Arg172, Tyr182, and Arg219. Residue Thr67 participates in Mg(2+) binding. The interval 183-253 (TTEHLTQIVM…LAKEALELLQ (71 aa)) is small ATPAse domain (RuvB-S). The interval 256 to 333 (RLGLDHIDHK…EHFGMEVPKQ (78 aa)) is head domain (RuvB-H). Residues Arg311 and Arg316 each coordinate DNA.

Belongs to the RuvB family. As to quaternary structure, homohexamer. Forms an RuvA(8)-RuvB(12)-Holliday junction (HJ) complex. HJ DNA is sandwiched between 2 RuvA tetramers; dsDNA enters through RuvA and exits via RuvB. An RuvB hexamer assembles on each DNA strand where it exits the tetramer. Each RuvB hexamer is contacted by two RuvA subunits (via domain III) on 2 adjacent RuvB subunits; this complex drives branch migration. In the full resolvosome a probable DNA-RuvA(4)-RuvB(12)-RuvC(2) complex forms which resolves the HJ.

The protein localises to the cytoplasm. The enzyme catalyses ATP + H2O = ADP + phosphate + H(+). Its function is as follows. The RuvA-RuvB-RuvC complex processes Holliday junction (HJ) DNA during genetic recombination and DNA repair, while the RuvA-RuvB complex plays an important role in the rescue of blocked DNA replication forks via replication fork reversal (RFR). RuvA specifically binds to HJ cruciform DNA, conferring on it an open structure. The RuvB hexamer acts as an ATP-dependent pump, pulling dsDNA into and through the RuvAB complex. RuvB forms 2 homohexamers on either side of HJ DNA bound by 1 or 2 RuvA tetramers; 4 subunits per hexamer contact DNA at a time. Coordinated motions by a converter formed by DNA-disengaged RuvB subunits stimulates ATP hydrolysis and nucleotide exchange. Immobilization of the converter enables RuvB to convert the ATP-contained energy into a lever motion, pulling 2 nucleotides of DNA out of the RuvA tetramer per ATP hydrolyzed, thus driving DNA branch migration. The RuvB motors rotate together with the DNA substrate, which together with the progressing nucleotide cycle form the mechanistic basis for DNA recombination by continuous HJ branch migration. Branch migration allows RuvC to scan DNA until it finds its consensus sequence, where it cleaves and resolves cruciform DNA. This chain is Holliday junction branch migration complex subunit RuvB, found in Geobacillus sp. (strain WCH70).